The following is an 89-amino-acid chain: Alpha-latrotoxin associated low molecular weight protein SGV242-280 (89 aa).

Positions 1-18 (MSKLHFLILLSVIVSVFC) are cleaved as a signal peptide.

It belongs to the arthropod CHH/MIH/GIH/VIH hormone family. In terms of tissue distribution, expressed by the venom gland.

It is found in the secreted. Its function is as follows. May increase the toxicity of alpha-latrotoxin and/or other venom components. Is non-toxic to mice and to the cockroach Periplaneta americana. The protein is Alpha-latrotoxin associated low molecular weight protein SGV242-280 of Steatoda grossa (False black widow).